A 541-amino-acid polypeptide reads, in one-letter code: Protein wntless homolog (541 aa).

At 1-15 (MAGAIIENMSTKKLC) the chain is on the cytoplasmic side. A helical membrane pass occupies residues 16-36 (IVGGILLVFQIIAFLVGGLIA). Residues 37–232 (PGPTTAVSYM…GIHQNGGFTK (196 aa)) lie on the Lumenal side of the membrane. The interval 101 to 232 (MEMSPWFQFM…GIHQNGGFTK (132 aa)) is interaction with Wnt proteins. A helical membrane pass occupies residues 233–253 (VWFAMKTFLTPSIFIIMVWYW). Residues 254 to 268 (RRITMMSRPPVLLEK) lie on the Cytoplasmic side of the membrane. A helical membrane pass occupies residues 269–289 (VIFALGISMTFINIPVEWFSI). The Lumenal segment spans residues 290–303 (GFDWTWMLLFGDIR). A helical membrane pass occupies residues 304–324 (QGIFYAMLLSFWIIFCGEHMM). Residues 325 to 331 (DQHERNH) are Cytoplasmic-facing. A helical membrane pass occupies residues 332–352 (IAGYWKQVGPIAVGSFCLFIF). At 353–380 (DMCERGVQLTNPFYSIWTTDIGTELAMA) the chain is on the lumenal side. The chain crosses the membrane as a helical span at residues 381-401 (FIIVAGICLCLYFLFLCFMVF). Topologically, residues 402 to 431 (QVFRNISGKQSSLPAMSKVRRLHYEGLIFR) are cytoplasmic. A helical transmembrane segment spans residues 432–452 (FKFLMLITLACAAMTVIFFIV). Over 453–471 (SQVTEGHWKWGGVTVQVNS) the chain is Lumenal. The chain crosses the membrane as a helical span at residues 472–492 (AFFTGIYGMWNLYVFALMFLY). Topologically, residues 493 to 541 (APSHKNYGEDQSNGDLGVHSGEELQLTTTITHVDGPTEIYKLTRKEAQE) are cytoplasmic.

The protein belongs to the wntless family. Interacts with WNT3A. Interacts with WNT1, WNT3 and WNT5A. N-glycosylated.

The protein localises to the golgi apparatus membrane. The protein resides in the cytoplasmic vesicle membrane. It localises to the cell membrane. It is found in the endoplasmic reticulum membrane. Its subcellular location is the early endosome membrane. In terms of biological role, regulates Wnt proteins sorting and secretion in a feedback regulatory mechanism. This reciprocal interaction plays a key role in the regulation of expression, subcellular location, binding and organelle-specific association of Wnt proteins. Plays also an important role in establishment of the anterior-posterior body axis formation during development. In Homo sapiens (Human), this protein is Protein wntless homolog (WLS).